We begin with the raw amino-acid sequence, 279 residues long: Cyanocobalamin reductase / alkylcobalamin dealkylase (279 aa).

Substrate is bound by residues D104, I115–Q118, Y129–Q131, C149, and I160. Residues P239–P279 form a disordered region. Over residues P243–P257 the composition is skewed to low complexity. S247, S272, and S276 each carry phosphoserine.

Belongs to the MMACHC family. As to quaternary structure, monomer in the absence of bound substrate. Homodimer; dimerization is triggered by binding to FMN or adenosylcobalamin. Interacts with LMBRD1 and ABCD4; the interaction ensures the transport of cobalamin from the lysosome to the cytoplasm. Forms a multiprotein complex with MMADHC, MTR and MTRR; the interaction with MTR could modulate MMACHC-dependent processing of cobalamin. Heterodimer with MMADHC; the interaction might play a role in the regulation of the balance between AdoCbl and MeCbl synthesis. FAD serves as cofactor. It depends on FMN as a cofactor. In terms of tissue distribution, detected in liver and kidney (at protein level). Detected in embryos.

It localises to the cytoplasm. Its subcellular location is the cytosol. It catalyses the reaction 2 cob(II)alamin-[cyanocobalamin reductase] + 2 hydrogen cyanide + NADP(+) = 2 cyanocob(III)alamin + 2 apo-[cyanocobalamin reductase] + NADPH + H(+). The enzyme catalyses apo-[alkylcobalamin reductase] + an R-cob(III)alamin + glutathione = cob(I)alamin-[alkylcobalamin reductase] + an S-substituted glutathione + H(+). It carries out the reaction apo-[alkylcobalamin reductase] + methylcob(III)alamin + glutathione = S-methyl glutathione + cob(I)alamin-[alkylcobalamin reductase] + H(+). The catalysed reaction is apo-[alkylcobalamin reductase] + adenosylcob(III)alamin + glutathione = S-adenosylglutathione + cob(I)alamin-[alkylcobalamin reductase] + H(+). Cobalamin (vitamin B12) cytosolic chaperone that catalyzes the reductive decyanation of cyanocob(III)alamin (cyanocobalamin, CNCbl) to yield cob(II)alamin and cyanide, using FAD or FMN as cofactors and NADPH as cosubstrate. Cyanocobalamin constitutes the inactive form of vitamin B12 introduced from the diet, and is converted into the active cofactors methylcobalamin (MeCbl) involved in methionine biosynthesis, and 5'-deoxyadenosylcobalamin (AdoCbl) involved in the TCA cycle. Forms a complex with the lysosomal transporter ABCD4 and its chaperone LMBRD1, to transport cobalamin across the lysosomal membrane into the cytosol. The processing of cobalamin in the cytosol occurs in a multiprotein complex composed of at least MMACHC, MMADHC, MTRR (methionine synthase reductase) and MTR (methionine synthase) which may contribute to shuttle safely and efficiently cobalamin towards MTR in order to produce methionine. Also acts as a glutathione transferase by catalyzing the dealkylation of the alkylcob(III)alamins MeCbl and AdoCbl, using the thiolate of glutathione for nucleophilic displacement to generate cob(I)alamin and the corresponding glutathione thioether. The conversion of incoming MeCbl or AdoCbl into a common intermediate cob(I)alamin is necessary to meet the cellular needs for both cofactors. Cysteine and homocysteine cannot substitute for glutathione in this reaction. The chain is Cyanocobalamin reductase / alkylcobalamin dealkylase from Mus musculus (Mouse).